The following is a 455-amino-acid chain: Probable alpha-galactosidase B (455 aa).

Residues 1–16 (MIEFLALITLISRANA) form the signal peptide. 2 disulfide bridges follow: Cys39-Cys71 and Cys121-Cys151. Asn42 carries N-linked (GlcNAc...) asparagine glycosylation. Residue Asp149 is the Nucleophile of the active site. Residues Asn177 and Asn192 are each glycosylated (N-linked (GlcNAc...) asparagine). A substrate-binding site is contributed by 222 to 226 (NWGNA). Catalysis depends on Asp244, which acts as the Proton donor. N-linked (GlcNAc...) asparagine glycosylation is present at Asn395.

It belongs to the glycosyl hydrolase 27 family.

It is found in the secreted. The enzyme catalyses Hydrolysis of terminal, non-reducing alpha-D-galactose residues in alpha-D-galactosides, including galactose oligosaccharides, galactomannans and galactolipids.. Its function is as follows. Hydrolyzes a variety of simple alpha-D-galactoside as well as more complex molecules such as oligosaccharides and polysaccharides. The polypeptide is Probable alpha-galactosidase B (aglB) (Emericella nidulans (strain FGSC A4 / ATCC 38163 / CBS 112.46 / NRRL 194 / M139) (Aspergillus nidulans)).